We begin with the raw amino-acid sequence, 86 residues long: Toxin Td1 (86 aa).

A signal peptide spans 1–20; the sequence is MIRFILFISCFFLIGMVIEC. Residues 21-83 form the LCN-type CS-alpha/beta domain; that stretch reads KDGYLMEPNG…VWERATNRCG (63 aa). 4 cysteine pairs are disulfide-bonded: cysteine 31/cysteine 82, cysteine 35/cysteine 57, cysteine 43/cysteine 63, and cysteine 47/cysteine 65. Position 84 is a lysine amide (lysine 84).

As to expression, expressed by the venom gland.

The protein localises to the secreted. In terms of biological role, beta toxins bind voltage-independently at site-4 of sodium channels (Nav) and shift the voltage of activation toward more negative potentials thereby affecting sodium channel activation and promoting spontaneous and repetitive firing. This Tityus discrepans (Venezuelan scorpion) protein is Toxin Td1.